The primary structure comprises 58 residues: MSNMLEITLIKSTIGATEKQCAVVRGLGLRRLHQTVTLQDSPETRGMISKINHMLKVK.

The protein belongs to the universal ribosomal protein uL30 family. As to quaternary structure, part of the 50S ribosomal subunit.

This is Large ribosomal subunit protein uL30 from Trichlorobacter lovleyi (strain ATCC BAA-1151 / DSM 17278 / SZ) (Geobacter lovleyi).